The chain runs to 229 residues: Large ribosomal subunit protein uL1 (229 aa).

It belongs to the universal ribosomal protein uL1 family. As to quaternary structure, part of the 50S ribosomal subunit.

Binds directly to 23S rRNA. The L1 stalk is quite mobile in the ribosome, and is involved in E site tRNA release. Functionally, protein L1 is also a translational repressor protein, it controls the translation of the L11 operon by binding to its mRNA. This chain is Large ribosomal subunit protein uL1, found in Pediococcus pentosaceus (strain ATCC 25745 / CCUG 21536 / LMG 10740 / 183-1w).